A 503-amino-acid polypeptide reads, in one-letter code: Surface lipoprotein assembly modifier (503 aa).

The signal sequence occupies residues 1–34 (MTITPVYTTFTPTKTPIKFFMAGLTFLIAHISHA). Positions 38-220 (RTDNQEPINQ…QYRQALKQRD (183 aa)) are N-terminal domain. A TPR repeat occupies 136-169 (ILLGYANALAALDKGNAKKAIDELRRIIAIMPEY). The interval 221–503 (SWTWQVGMNL…QMFVEFSRIF (283 aa)) is C-terminal probable beta barrel. 14 consecutive transmembrane segments (beta stranded) span residues 222-232 (WTWQVGMNLAK), 259-270 (LSYQLGADKKWS), 275-285 (AYVGANAQIYG), 299-308 (GRLGANLGFA), 313-322 (DLSIETYGEK), 334-343 (IGIRMSVDYR), 348-358 (FQSLNAIDISR), 372-382 (TLYSTSLIYYP), 387-396 (YYLLGADFYD), 410-419 (RGIRTAWGQE), 424-434 (LSSRAQISINK), 454-463 (MQASLSLWHR), 470-479 (ITPRLTISTN), and 493-503 (NQMFVEFSRIF).

This sequence belongs to the Slam family.

The protein resides in the cell outer membrane. Required for correct export to the cell surface of some cell outer membrane lipoproteins (tested with TpbP) upon heterologous expression in E.coli and probably also in Moraxella. This is Surface lipoprotein assembly modifier from Moraxella catarrhalis (Branhamella catarrhalis).